A 799-amino-acid polypeptide reads, in one-letter code: Histidine biosynthesis trifunctional protein (799 aa).

The phosphoribosyl-AMP cyclohydrolase stretch occupies residues 1-229 (MVLPILPLID…FIVEQENVGF (229 aa)). The tract at residues 230–312 (CHLETMSCFG…FYFALAKLVA (83 aa)) is phosphoribosyl-ATP pyrophosphohydrolase. Residues 313-799 (NDVSLKDVEN…KLGLIPKDFQ (487 aa)) are histidinol dehydrogenase. 2 residues coordinate Zn(2+): glutamine 618 and histidine 621. Active-site residues include glutamate 687 and histidine 688. Positions 721 and 780 each coordinate Zn(2+).

This sequence in the C-terminal section; belongs to the histidinol dehydrogenase family. Zn(2+) serves as cofactor.

It carries out the reaction 1-(5-phospho-beta-D-ribosyl)-5'-AMP + H2O = 1-(5-phospho-beta-D-ribosyl)-5-[(5-phospho-beta-D-ribosylamino)methylideneamino]imidazole-4-carboxamide. The enzyme catalyses 1-(5-phospho-beta-D-ribosyl)-ATP + H2O = 1-(5-phospho-beta-D-ribosyl)-5'-AMP + diphosphate + H(+). The catalysed reaction is L-histidinol + 2 NAD(+) + H2O = L-histidine + 2 NADH + 3 H(+). It functions in the pathway amino-acid biosynthesis; L-histidine biosynthesis; L-histidine from 5-phospho-alpha-D-ribose 1-diphosphate: step 2/9. Its pathway is amino-acid biosynthesis; L-histidine biosynthesis; L-histidine from 5-phospho-alpha-D-ribose 1-diphosphate: step 3/9. It participates in amino-acid biosynthesis; L-histidine biosynthesis; L-histidine from 5-phospho-alpha-D-ribose 1-diphosphate: step 9/9. The protein is Histidine biosynthesis trifunctional protein of Saccharomyces cerevisiae (strain ATCC 204508 / S288c) (Baker's yeast).